The primary structure comprises 406 residues: Olfactomedin-like protein 3 (406 aa).

Positions 1-21 (MGPSAPLLLFFLLSWPGSLQG) are cleaved as a signal peptide. Residues 22–101 (QQHHLVEYME…REVDYLETQN (80 aa)) adopt a coiled-coil conformation. In terms of domain architecture, Olfactomedin-like spans 134–401 (DCSYTISQVR…QIVYKLEMKK (268 aa)). Residues Cys135 and Cys328 are joined by a disulfide bond. N-linked (GlcNAc...) asparagine glycosylation occurs at Asn248.

It belongs to the OLFML3 family.

The protein localises to the secreted. Functionally, secreted scaffold protein that plays an essential role in dorsoventral patterning during early development. Stabilizes axial formation by restricting chordin (CHRD) activity on the dorsal side. Acts by facilitating the association between the tolloid proteases and their substrate chordin (CHRD), leading to enhance chordin (CHRD) degradation. May have matrix-related function involved in placental and embryonic development, or play a similar role in other physiological processes. The sequence is that of Olfactomedin-like protein 3 (Olfml3) from Rattus norvegicus (Rat).